The sequence spans 64 residues: Large ribosomal subunit protein eL37 (64 aa).

Zn(2+)-binding residues include C20, C23, C35, and C38. The C4-type zinc finger occupies C20–C38.

Belongs to the eukaryotic ribosomal protein eL37 family. Zn(2+) serves as cofactor.

In terms of biological role, binds to the 23S rRNA. This Methanococcus maripaludis (strain DSM 14266 / JCM 13030 / NBRC 101832 / S2 / LL) protein is Large ribosomal subunit protein eL37.